Reading from the N-terminus, the 775-residue chain is Subtilisin-like protease SBT4.1 (775 aa).

The N-terminal stretch at 1–23 (MAIAFHTFLLQLLLFFFASFAEA) is a signal peptide. N-linked (GlcNAc...) asparagine glycosylation occurs at N24. The propeptide at 24 to 106 (NDSRKTYLVQ…VSRSRNLKLQ (83 aa)) is activation peptide. One can recognise an Inhibitor I9 domain in the interval 29–105 (TYLVQMKVGG…EVSRSRNLKL (77 aa)). The region spanning 110 to 606 (SWDFMNLTLK…SGHLNATKVR (497 aa)) is the Peptidase S8 domain. 2 N-linked (GlcNAc...) asparagine glycosylation sites follow: N115 and N126. D136 serves as the catalytic Charge relay system. N162 is a glycosylation site (N-linked (GlcNAc...) asparagine). Catalysis depends on H196, which acts as the Charge relay system. The PA domain maps to 365–459 (FYPLLNEKAP…FLDEQKKGKL (95 aa)). The N-linked (GlcNAc...) asparagine glycan is linked to N437. S551 acts as the Charge relay system in catalysis. A glycan (N-linked (GlcNAc...) asparagine) is linked at N601.

Belongs to the peptidase S8 family. Post-translationally, the C-terminal propeptide is autocleaved.

The protein resides in the secreted. This chain is Subtilisin-like protease SBT4.1, found in Arabidopsis thaliana (Mouse-ear cress).